Consider the following 130-residue polypeptide: Small ribosomal subunit protein uS8 (130 aa).

The protein belongs to the universal ribosomal protein uS8 family. Part of the 30S ribosomal subunit. Contacts proteins S5 and S12.

Functionally, one of the primary rRNA binding proteins, it binds directly to 16S rRNA central domain where it helps coordinate assembly of the platform of the 30S subunit. This chain is Small ribosomal subunit protein uS8, found in Nitrosococcus oceani (strain ATCC 19707 / BCRC 17464 / JCM 30415 / NCIMB 11848 / C-107).